The primary structure comprises 293 residues: Phosphatidylserine decarboxylase proenzyme (293 aa).

Catalysis depends on charge relay system; for autoendoproteolytic cleavage activity residues D88, H144, and S247. The Schiff-base intermediate with substrate; via pyruvic acid; for decarboxylase activity role is filled by S247. At S247 the chain carries Pyruvic acid (Ser); by autocatalysis.

The protein belongs to the phosphatidylserine decarboxylase family. PSD-B subfamily. Prokaryotic type I sub-subfamily. As to quaternary structure, heterodimer of a large membrane-associated beta subunit and a small pyruvoyl-containing alpha subunit. Pyruvate is required as a cofactor. In terms of processing, is synthesized initially as an inactive proenzyme. Formation of the active enzyme involves a self-maturation process in which the active site pyruvoyl group is generated from an internal serine residue via an autocatalytic post-translational modification. Two non-identical subunits are generated from the proenzyme in this reaction, and the pyruvate is formed at the N-terminus of the alpha chain, which is derived from the carboxyl end of the proenzyme. The autoendoproteolytic cleavage occurs by a canonical serine protease mechanism, in which the side chain hydroxyl group of the serine supplies its oxygen atom to form the C-terminus of the beta chain, while the remainder of the serine residue undergoes an oxidative deamination to produce ammonia and the pyruvoyl prosthetic group on the alpha chain. During this reaction, the Ser that is part of the protease active site of the proenzyme becomes the pyruvoyl prosthetic group, which constitutes an essential element of the active site of the mature decarboxylase.

The protein localises to the cell membrane. It carries out the reaction a 1,2-diacyl-sn-glycero-3-phospho-L-serine + H(+) = a 1,2-diacyl-sn-glycero-3-phosphoethanolamine + CO2. It functions in the pathway phospholipid metabolism; phosphatidylethanolamine biosynthesis; phosphatidylethanolamine from CDP-diacylglycerol: step 2/2. In terms of biological role, catalyzes the formation of phosphatidylethanolamine (PtdEtn) from phosphatidylserine (PtdSer). In Xylella fastidiosa (strain 9a5c), this protein is Phosphatidylserine decarboxylase proenzyme.